Here is a 323-residue protein sequence, read N- to C-terminus: Arginase-1 (323 aa).

A disordered region spans residues 1–27 (MSSKPKPIEIIGAPFSKGQPRGGVEKG). Position 17 is an N6-succinyllysine (lysine 17). A phosphoserine mark is found at serine 62 and serine 72. Residue lysine 75 is modified to N6-succinyllysine. Mn(2+)-binding residues include histidine 101, aspartate 124, histidine 126, and aspartate 128. Substrate is bound by residues 126 to 130 (HTDIN) and 137 to 139 (SGN). Serine 163 is modified (phosphoserine). Aspartate 183 is a substrate binding site. Residue serine 217 is modified to Phosphoserine. Positions 232 and 234 each coordinate Mn(2+). Substrate-binding residues include threonine 246 and glutamate 277. At threonine 281 the chain carries Phosphothreonine.

This sequence belongs to the arginase family. As to quaternary structure, homotrimer. Interacts with CMTM6. Requires Mn(2+) as cofactor. Detected in liver (at protein level).

The protein resides in the cytoplasm. It is found in the cytoplasmic granule. It carries out the reaction L-arginine + H2O = urea + L-ornithine. It participates in nitrogen metabolism; urea cycle; L-ornithine and urea from L-arginine: step 1/1. Inactivated by diethyl pyrocarbonate (DEPC). In terms of biological role, key element of the urea cycle converting L-arginine to urea and L-ornithine, which is further metabolized into metabolites proline and polyamides that drive collagen synthesis and bioenergetic pathways critical for cell proliferation, respectively; the urea cycle takes place primarily in the liver and, to a lesser extent, in the kidneys. Functionally, functions in L-arginine homeostasis in nonhepatic tissues characterized by the competition between nitric oxide synthase (NOS) and arginase for the available intracellular substrate arginine. Arginine metabolism is a critical regulator of innate and adaptive immune responses. Involved in an antimicrobial effector pathway in polymorphonuclear granulocytes (PMN). Upon PMN cell death is liberated from the phagolysosome and depletes arginine in the microenvironment leading to suppressed T cell and natural killer (NK) cell proliferation and cytokine secretion. In group 2 innate lymphoid cells (ILC2s) promotes acute type 2 inflammation in the lung and is involved in optimal ILC2 proliferation but not survival. Plays a role in the immune response of alternatively activated or M2 macrophages in processes such as wound healing and tissue regeneration, immune defense against multicellular pathogens and parasites, and immune suppression and allergic inflammation; the regulatory outcome seems to be organ specific. In tumor-infiltrating dendritic cells (DCs) and myeloid-derived suppressor cells (MDSCs) plays a role in suppression of T cell-mediated antitumor immunity. In Rattus norvegicus (Rat), this protein is Arginase-1 (Arg1).